The chain runs to 397 residues: Mannonate dehydratase (397 aa).

It belongs to the mannonate dehydratase family. Fe(2+) serves as cofactor. Requires Mn(2+) as cofactor.

The catalysed reaction is D-mannonate = 2-dehydro-3-deoxy-D-gluconate + H2O. The protein operates within carbohydrate metabolism; pentose and glucuronate interconversion. Catalyzes the dehydration of D-mannonate. The polypeptide is Mannonate dehydratase (Yersinia pestis bv. Antiqua (strain Angola)).